Here is a 502-residue protein sequence, read N- to C-terminus: MSVRSTKVTYRTSSAAPRSGGFSSFSYSGAPMASRASSASFSLGSSYGGASRFGSGYRSGFGGAGVGSAGITSVSVNQSLLAPLNLEIDPSIQQVRTEEKEQIKTLNNKFASFIDKVRFLEQQNKMLETKWNLLQNQKTTRSNMDGMFEAYISNLRRQLDGLGQDKMRLESELGNMQGLVEDFKNKYEDEINRRTELENEFVLLKKDVDEAYMNKVQLEARLEALTDEINFLRQLYEEELREMQSQISDTSVVLSMDNNRSLDLDGIIAEVRAQYEDVANKSRLEVENMYQVKYQELQTSAGRYGDDLKNTKTEISELTRYTTRLQSEIDALKAQRANLEAQIAEAEERGELALKDARNKLAELEAALQKAKQDMSRQLRDYQELMNVKLALDIEIATYRKLLEGEESRLESGFQNLSIQTKTVSGVSSGFGGGISSGFSNGVSSGFGGGYGGGYGGGYSYSSNVSSYIGDTKTSKRRLLVKTVETKDGRVLSESSDVFSKP.

Residues 1-98 (MSVRSTKVTY…DPSIQQVRTE (98 aa)) form a head region. Phosphoserine occurs at positions 13, 26, 37, and 40. A coil 1A region spans residues 99-134 (EKEQIKTLNNKFASFIDKVRFLEQQNKMLETKWNLL). Residues 99–410 (EKEQIKTLNN…KLLEGEESRL (312 aa)) enclose the IF rod domain. Residues 135 to 151 (QNQKTTRSNMDGMFEAY) form a linker 1 region. Positions 152 to 243 (ISNLRRQLDG…QLYEEELREM (92 aa)) are coil 1B. The tract at residues 244–267 (QSQISDTSVVLSMDNNRSLDLDGI) is linker 12. The tract at residues 268 to 406 (IAEVRAQYED…ATYRKLLEGE (139 aa)) is coil 2. Residues 269-390 (AEVRAQYEDV…DYQELMNVKL (122 aa)) form a necessary for interaction with PNN region. The tail stretch occupies residues 407-502 (ESRLESGFQN…SESSDVFSKP (96 aa)). S425, S428, S436, and S444 each carry phosphoserine.

The protein belongs to the intermediate filament family. Heterotetramer of two type I and two type II keratins. Keratin-8 associates with keratin-18. Expressed in oocytes, eggs, embryos, liver and intestinal mucosa.

The protein resides in the cytoplasm. The protein localises to the nucleus. It is found in the nucleoplasm. It localises to the nucleus matrix. In terms of biological role, together with KRT19, helps to link the contractile apparatus to dystrophin at the costameres of striated muscle. In Xenopus laevis (African clawed frog), this protein is Keratin, type II cytoskeletal 8.